Here is a 381-residue protein sequence, read N- to C-terminus: Alkanesulfonate monooxygenase (381 aa).

The protein belongs to the SsuD family. In terms of assembly, homotetramer.

It carries out the reaction an alkanesulfonate + FMNH2 + O2 = an aldehyde + FMN + sulfite + H2O + 2 H(+). Functionally, catalyzes the desulfonation of aliphatic sulfonates. The sequence is that of Alkanesulfonate monooxygenase from Escherichia coli O7:K1 (strain IAI39 / ExPEC).